The following is a 357-amino-acid chain: Uroporphyrinogen decarboxylase (357 aa).

Residues 27–31 (RQAGR), aspartate 77, tyrosine 154, threonine 209, and histidine 327 contribute to the substrate site.

This sequence belongs to the uroporphyrinogen decarboxylase family. Homodimer.

Its subcellular location is the cytoplasm. The catalysed reaction is uroporphyrinogen III + 4 H(+) = coproporphyrinogen III + 4 CO2. Its pathway is porphyrin-containing compound metabolism; protoporphyrin-IX biosynthesis; coproporphyrinogen-III from 5-aminolevulinate: step 4/4. Functionally, catalyzes the decarboxylation of four acetate groups of uroporphyrinogen-III to yield coproporphyrinogen-III. This is Uroporphyrinogen decarboxylase from Nitrosococcus oceani (strain ATCC 19707 / BCRC 17464 / JCM 30415 / NCIMB 11848 / C-107).